A 355-amino-acid chain; its full sequence is Glucose-6-phosphatase 2 (355 aa).

The Lumenal portion of the chain corresponds to 1-24; that stretch reads MDFLHRNGVLIIQHLQKDYRAYYT. A helical membrane pass occupies residues 25–45; sequence FLNFMSNVGDPRNIFFIYFPL. Residues 46-56 lie on the Cytoplasmic side of the membrane; it reads CFQFNQTVGTK. Residues 57–77 traverse the membrane as a helical segment; it reads MIWVAVIGDWLNLIFKWILFG. Over 78–115 the chain is Lumenal; that stretch reads HRPYWWVQETQIYPNHSSPCLEQFPTTCETGPGSPSGH. Residue Arg79 participates in substrate binding. Residue Asn92 is glycosylated (N-linked (GlcNAc...) asparagine). The active-site Proton donor is His115. A helical membrane pass occupies residues 116–136; sequence AMGASCVWYVMVTAALSHTVC. At 137–146 the chain is on the cytoplasmic side; that stretch reads GMDKFSITLH. A helical transmembrane segment spans residues 147 to 167; that stretch reads RLTWSFLWSVFWLIQISVCIS. A topological domain (lumenal) is located at residue Arg168. Substrate is bound at residue Arg168. Residues 169–189 form a helical membrane-spanning segment; the sequence is VFIATHFPHQVILGVIGGMLV. Catalysis depends on His174, which acts as the Nucleophile. Residues 190 to 211 are Cytoplasmic-facing; sequence AEAFEHTPGIQTASLGTYLKTN. The helical transmembrane segment at 212–232 threads the bilayer; the sequence is LFLFLFAVGFYLLLRVLNIDL. At 233 to 261 the chain is on the lumenal side; it reads LWSVPIAKKWCANPDWIHIDTTPFAGLVR. Residues 262–282 traverse the membrane as a helical segment; the sequence is NLGVLFGLGFAINSEMFLLSC. Residues 283–293 are Cytoplasmic-facing; the sequence is RGGNNYTLSFR. A helical transmembrane segment spans residues 294–314; sequence LLCALTSLTILQLYHFLQIPT. Topologically, residues 315–318 are lumenal; it reads HEEH. The chain crosses the membrane as a helical span at residues 319 to 339; that stretch reads LFYVLSFCKSASIPLTVVAFI. Topologically, residues 340–355 are cytoplasmic; that stretch reads PYSVHMLMKQSGKKSQ. The Prevents secretion from ER signature appears at 352 to 355; it reads KKSQ.

It belongs to the glucose-6-phosphatase family. In terms of processing, N-glycosylated; the non-glycosylated form is more unstable and is degraded through the proteasome. As to expression, specifically expressed in pancreas and also detected to a lower extent in testis. Expressed by most islet cells in the pancreas (at protein level).

The protein resides in the endoplasmic reticulum membrane. The catalysed reaction is D-glucose 6-phosphate + H2O = D-glucose + phosphate. The protein operates within carbohydrate biosynthesis; gluconeogenesis. In terms of biological role, may hydrolyze glucose-6-phosphate to glucose in the endoplasmic reticulum. May be responsible for glucose production through glycogenolysis and gluconeogenesis. The chain is Glucose-6-phosphatase 2 (G6PC2) from Homo sapiens (Human).